A 481-amino-acid polypeptide reads, in one-letter code: Rhamnogalacturonan I rhamnosyltransferase 4 (481 aa).

Residues 33 to 55 form a helical; Signal-anchor for type II membrane protein membrane-spanning segment; that stretch reads VWFFRVCSCILVWTCLIQLFWHS. N-linked (GlcNAc...) asparagine glycosylation is found at Asn85 and Asn118. 258 to 260 provides a ligand contact to substrate; it reads HLR. 2 N-linked (GlcNAc...) asparagine glycosylation sites follow: Asn372 and Asn432.

The protein belongs to the glycosyltransferase GT106 family.

It is found in the golgi apparatus membrane. It catalyses the reaction alpha-D-galacturonosyl-[(1-&gt;2)-alpha-L-rhamnosyl-(1-&gt;4)-alpha-D-galacturonosyl](n) + UDP-beta-L-rhamnose = [(1-&gt;2)-alpha-L-rhamnosyl-(1-&gt;4)-alpha-D-galacturonosyl](n+1) + UDP + H(+). The protein operates within glycan metabolism; pectin biosynthesis. Its function is as follows. Glycosyltransferase involved in the formation of rhamnogalacturonan I (RG-I) oligosaccharides in the seed coat mucilage, which is a specialized cell wall with abundant RG-I. Transfers the rhamnose residue from UDP-beta-L-rhamnose to RG-I oligosaccharides. This Arabidopsis thaliana (Mouse-ear cress) protein is Rhamnogalacturonan I rhamnosyltransferase 4.